A 297-amino-acid chain; its full sequence is Alarmin release inhibitor (297 aa).

3 N-linked (GlcNAc...) asparagine glycosylation sites follow: asparagine 107, asparagine 175, and asparagine 190. The 61-residue stretch at 151-211 (TYDPTPNTPT…WVPTLGVCPK (61 aa)) folds into the Sushi domain. Cysteines 183 and 209 form a disulfide.

As to quaternary structure, interacts with mouse IL33 (in reduced form).

The protein resides in the secreted. Its subcellular location is the host nucleus. Its function is as follows. Secreted protein which suppresses the host allergic response by inhibiting the interaction of host IL33 with its receptor in order to maintain parasitic infection. Binds to both host IL33 and host nuclear DNA and this dual binding blocks the interaction of IL33 with its receptor, and tethers IL33 within necrotic cells, preventing its release, and blocking allergic response initiation. This Heligmosomoides polygyrus (Parasitic roundworm) protein is Alarmin release inhibitor.